A 118-amino-acid polypeptide reads, in one-letter code: DNA-binding protein MmarC5_1518 (118 aa).

The span at 1–12 shows a compositional bias: basic and acidic residues; sequence MNPEEIRQRRLQ. Residues 1-35 are disordered; it reads MNPEEIRQRRLQEMQAKAQEQGAEDPEAQRQAQEQ.

The protein belongs to the PDCD5 family.

This Methanococcus maripaludis (strain C5 / ATCC BAA-1333) protein is DNA-binding protein MmarC5_1518.